The chain runs to 315 residues: DNA-directed RNA polymerase subunit alpha (315 aa).

Residues 1–228 are alpha N-terminal domain (alpha-NTD); sequence MIEIEKPKIE…EHLNLFIDLS (228 aa). The interval 245–315 is alpha C-terminal domain (alpha-CTD); it reads KEKVLEMTIE…LGLSLAPSED (71 aa).

This sequence belongs to the RNA polymerase alpha chain family. In terms of assembly, homodimer. The RNAP catalytic core consists of 2 alpha, 1 beta, 1 beta' and 1 omega subunit. When a sigma factor is associated with the core the holoenzyme is formed, which can initiate transcription.

It catalyses the reaction RNA(n) + a ribonucleoside 5'-triphosphate = RNA(n+1) + diphosphate. Its function is as follows. DNA-dependent RNA polymerase catalyzes the transcription of DNA into RNA using the four ribonucleoside triphosphates as substrates. The polypeptide is DNA-directed RNA polymerase subunit alpha (Acetivibrio thermocellus (strain ATCC 27405 / DSM 1237 / JCM 9322 / NBRC 103400 / NCIMB 10682 / NRRL B-4536 / VPI 7372) (Clostridium thermocellum)).